We begin with the raw amino-acid sequence, 287 residues long: N-methyltransferase verN (287 aa).

Belongs to the methyltransferase superfamily. LaeA methyltransferase family.

It participates in mycotoxin biosynthesis. N-methyltransferase; part of the gene cluster that mediates the biosynthesis of 11'-deoxyverticillin A, one of the dimeric epipolythiodioxopiperazines (ETPs) from the verticillin family that act as mycotoxins. 11'-deoxyverticillin A is required for normal conidiation. The nonribosomal peptide synthetase verP is speculated to be responsible for condensation of amino acids to form the carbon skeleton of verticillin, whereas the cluster-specific tailoring enzymes are involved in further modifications leading to the production of 11'-deoxyverticillin A. This is N-methyltransferase verN from Clonostachys rogersoniana.